Here is a 491-residue protein sequence, read N- to C-terminus: MSVAPETTVALQDRFFRELPELAVRWQAETFPELRLLVLNEPLATQLGLDTGWLRGPDGLRFLTGNLVPTGAAPVAQAYSGHQFGGFVPRLGDGRALLLGELVDNKGRLRDIHLKGSGATPFARGGDGLAAVGPMLREYVVSEAMHALGVPTTRSLAVVGTGRPVYREATLPGAVLARVASSHLRVGSFQYAAATGNRDLLRRLADHAIARHHPGAADAEQPYLALFEAVVAAQASLIAQWMLIGFVHGVMNTDNMTISGETIDYGPCAFMEAYDPDTVFSSIDFWGRYAYGNQPVIAGWNLARFAETLLPLFSENTEEAIALAERSFGVFQTRYDAVWATGMRAKLGLPAQVDAEFAAALIDELLALLKANHVDYTSFFRQLGRAARGDDRSAAEPAREMFMDLPGFDAWLARWRALGPDADAMDRVNPIYIPRNHLVEEALAAATDGDLDPLDQLLAAVTAPYTERPGFERYASPAPEDFGKYQTFCGT.

Positions 92, 94, 95, 115, 127, 128, 178, and 185 each coordinate ATP. Asp-254 serves as the catalytic Proton acceptor. Asn-255 and Asp-264 together coordinate Mg(2+). Asp-264 serves as a coordination point for ATP.

It belongs to the SELO family. Mg(2+) is required as a cofactor. Mn(2+) serves as cofactor.

It catalyses the reaction L-seryl-[protein] + ATP = 3-O-(5'-adenylyl)-L-seryl-[protein] + diphosphate. The enzyme catalyses L-threonyl-[protein] + ATP = 3-O-(5'-adenylyl)-L-threonyl-[protein] + diphosphate. The catalysed reaction is L-tyrosyl-[protein] + ATP = O-(5'-adenylyl)-L-tyrosyl-[protein] + diphosphate. It carries out the reaction L-histidyl-[protein] + UTP = N(tele)-(5'-uridylyl)-L-histidyl-[protein] + diphosphate. It catalyses the reaction L-seryl-[protein] + UTP = O-(5'-uridylyl)-L-seryl-[protein] + diphosphate. The enzyme catalyses L-tyrosyl-[protein] + UTP = O-(5'-uridylyl)-L-tyrosyl-[protein] + diphosphate. Functionally, nucleotidyltransferase involved in the post-translational modification of proteins. It can catalyze the addition of adenosine monophosphate (AMP) or uridine monophosphate (UMP) to a protein, resulting in modifications known as AMPylation and UMPylation. The chain is Protein nucleotidyltransferase YdiU from Mycolicibacterium paratuberculosis (strain ATCC BAA-968 / K-10) (Mycobacterium paratuberculosis).